The following is a 1259-amino-acid chain: Zinc finger protein BRUTUS-like At1g74770 (1259 aa).

A helical membrane pass occupies residues 441–461 (LLYTSIHVLPLGLLKCVILWF). Composition is skewed to basic and acidic residues over residues 904-916 (KEEKDLERSESKK) and 924-934 (EGDKEQTDKMS). Residues 904–938 (KEEKDLERSESKKICRGSNQEGDKEQTDKMSQKVS) are disordered. The segment at 1018–1087 (PHSLIFGCNH…ANCSNTSCKS (70 aa)) adopts a CHY-type zinc-finger fold. Residues C1025, H1027, C1038, C1039, C1045, C1048, H1049, H1055, C1067, C1070, C1080, C1085, C1094, C1097, H1108, C1109, C1112, C1115, H1127, C1128, C1131, C1134, H1142, and C1144 each coordinate Zn(2+). The segment at 1089-1152 (MGKYFCKICK…VCREKCLEDN (64 aa)) adopts a CTCHY-type zinc-finger fold. The RING-type; atypical zinc finger occupies 1153–1195 (CPICHEYIFTSSSPVKALPCGHLMHSTCFQEYTCSHYTCPVCS).

As to quaternary structure, binds zinc and iron ions.

The protein localises to the membrane. The protein resides in the nucleus. It functions in the pathway protein modification; protein ubiquitination. Functionally, probable E3 ubiquitin-protein ligase that may regulate the response to iron deficiency and thus contributes to iron homeostasis. This chain is Zinc finger protein BRUTUS-like At1g74770, found in Arabidopsis thaliana (Mouse-ear cress).